Reading from the N-terminus, the 287-residue chain is ATP synthase gamma chain (287 aa).

This sequence belongs to the ATPase gamma chain family. As to quaternary structure, F-type ATPases have 2 components, CF(1) - the catalytic core - and CF(0) - the membrane proton channel. CF(1) has five subunits: alpha(3), beta(3), gamma(1), delta(1), epsilon(1). CF(0) has three main subunits: a, b and c.

It localises to the cell inner membrane. Functionally, produces ATP from ADP in the presence of a proton gradient across the membrane. The gamma chain is believed to be important in regulating ATPase activity and the flow of protons through the CF(0) complex. The chain is ATP synthase gamma chain from Hahella chejuensis (strain KCTC 2396).